Consider the following 696-residue polypeptide: MKQPLIELKNIERYHTNGDTLTTVLKSINLKIYSGEMVAIVGASGSGKSTLMNIIGALDVPNSGEYFIYGRNIADLSGDELAELRCRHFGFVFQRYHLLSHLTAVKNVEVPAIYAMADKILRNQRANALLCQLGLEKQLENKPAQLSGGQQQRVSIARALMNGGDIILADEPTGALDSQSSQDVLKILKDLNRKGHTVILITHDLAIAEHADRVICIQDGKIVSDTANALESMIKPQNKRTFIDDAVIEVCQQHNTEKLNRPNEKNNIDNDNKENNNGYNRNDNSFLNNPKKKLNSSILRSFNSYAESFFMAFNMMMAHKIRTFLTMLGIIIGIIAVVFVIALGEGTKKKVLDEFSSLGNNTIDIFPGKWGDESDNVHTLNMEDLELLYQQPYVQRATPVLLHIAKARYLNKTMRSLINGVSHDFFMLKNYQLVTGRLFDQNDLTLSQPVGVIDKKSAKLLFDMDDPINKIIFIDDIPLSIIGVVESSSLQQNSGKEILIWIPHSTMATRILNQSYIQQISVQLQPNVSPLKSDKAIIDLLTIKHGQKDFYTFSSSRFLQSLNKTTQALTLMISSIAFISLIVGGIGIMNIMLVSVIERTKEIGIRIAVGAKERDIRFQFLIESTMVSLIGGCIGVGCALLFGGLFSLAETSIKIQFTLSSFLIAFLCSSMIGIVFGYFPARNAAKLRPVDALSRE.

The 239-residue stretch at 6–244 folds into the ABC transporter domain; that stretch reads IELKNIERYH…KPQNKRTFID (239 aa). ATP is bound at residue 42-49; it reads GASGSGKS. Positions 254 to 287 are disordered; the sequence is HNTEKLNRPNEKNNIDNDNKENNNGYNRNDNSFL. A compositionally biased stretch (basic and acidic residues) spans 255-274; it reads NTEKLNRPNEKNNIDNDNKE. Over residues 275-284 the composition is skewed to low complexity; it reads NNNGYNRNDN. 4 consecutive transmembrane segments (helical) span residues 324–344, 576–596, 626–646, and 659–679; these read FLTM…IALG, IAFI…LVSV, MVSL…GGLF, and LSSF…FGYF.

The protein belongs to the ABC transporter superfamily. Macrolide exporter (TC 3.A.1.122) family. As to quaternary structure, homodimer. Part of the tripartite efflux system MacAB-TolC, which is composed of an inner membrane transporter, MacB, a periplasmic membrane fusion protein, MacA, and an outer membrane component, TolC. The complex forms a large protein conduit and can translocate molecules across both the inner and outer membranes. Interacts with MacA.

The protein localises to the cell inner membrane. Part of the tripartite efflux system MacAB-TolC. MacB is a non-canonical ABC transporter that contains transmembrane domains (TMD), which form a pore in the inner membrane, and an ATP-binding domain (NBD), which is responsible for energy generation. Confers resistance against macrolides. This is Macrolide export ATP-binding/permease protein MacB from Haemophilus ducreyi (strain 35000HP / ATCC 700724).